Consider the following 165-residue polypeptide: Growth arrest and DNA damage-inducible protein GADD45 alpha (165 aa).

T2 carries the post-translational modification Phosphothreonine.

The protein belongs to the GADD45 family. As to quaternary structure, interacts with AURKA, GADD45GIP1 and PCNA. Interacts with MAPK14.

The protein resides in the nucleus. Its function is as follows. Might affect PCNA interaction with some CDK (cell division protein kinase) complexes; stimulates DNA excision repair in vitro and inhibits entry of cells into S phase. In T-cells, functions as a regulator of p38 MAPKs by inhibiting p88 phosphorylation and activity. The protein is Growth arrest and DNA damage-inducible protein GADD45 alpha (Gadd45a) of Mus musculus (Mouse).